Here is a 198-residue protein sequence, read N- to C-terminus: Mediator of RNA polymerase II transcription subunit 20 (198 aa).

Belongs to the Mediator complex subunit 20 family. Component of the Mediator complex.

The protein resides in the nucleus. Functionally, component of the Mediator complex, a coactivator involved in the regulated transcription of nearly all RNA polymerase II-dependent genes. Mediator functions as a bridge to convey information from gene-specific regulatory proteins to the basal RNA polymerase II transcription machinery. Mediator is recruited to promoters by direct interactions with regulatory proteins and serves as a scaffold for the assembly of a functional preinitiation complex with RNA polymerase II and the general transcription factors. The polypeptide is Mediator of RNA polymerase II transcription subunit 20 (mdt-20) (Caenorhabditis briggsae).